The primary structure comprises 84 residues: Putative membrane protein insertion efficiency factor (84 aa).

Belongs to the UPF0161 family.

Its subcellular location is the cell inner membrane. Functionally, could be involved in insertion of integral membrane proteins into the membrane. The sequence is that of Putative membrane protein insertion efficiency factor from Shewanella sp. (strain ANA-3).